The chain runs to 245 residues: tRNA (guanine-N(1)-)-methyltransferase (245 aa).

S-adenosyl-L-methionine contacts are provided by residues Gly114 and 133–138 (IGDYVL).

The protein belongs to the RNA methyltransferase TrmD family. As to quaternary structure, homodimer.

It localises to the cytoplasm. It catalyses the reaction guanosine(37) in tRNA + S-adenosyl-L-methionine = N(1)-methylguanosine(37) in tRNA + S-adenosyl-L-homocysteine + H(+). In terms of biological role, specifically methylates guanosine-37 in various tRNAs. This Prochlorococcus marinus (strain MIT 9312) protein is tRNA (guanine-N(1)-)-methyltransferase.